The sequence spans 1861 residues: Polyketide synthase 2 (1861 aa).

In terms of domain architecture, Ketosynthase family 3 (KS3) spans 109–525; it reads DSKIAIIGMS…GGNSALLLED (417 aa). Residues Cys-264, His-399, and His-441 each act as for beta-ketoacyl synthase activity in the active site. Positions 626-931 are malonyl-CoA:ACP transacylase (MAT) domain; the sequence is GFVFSGQGAQ…PSLHRKDDGW (306 aa). Residue Ser-716 is the For acyl/malonyl transferase activity of the active site. Positions 1008–1312 are product template (PT) domain; the sequence is TSSVQKVIQQ…VFGGMTVLPP (305 aa). Positions 1012–1146 are N-terminal hotdog fold; that stretch reads QKVIQQTDGP…CILRFADPKS (135 aa). A PKS/mFAS DH domain is found at 1012 to 1318; that stretch reads QKVIQQTDGP…VLPPRRGADA (307 aa). His-1045 serves as the catalytic Proton acceptor; for dehydratase activity. The interval 1174–1318 is C-terminal hotdog fold; sequence DSLLSKGIVY…VLPPRRGADA (145 aa). Asp-1232 acts as the Proton donor; for dehydratase activity in catalysis. Positions 1356 to 1433 constitute a Carrier 1 domain; it reads SPQSGAIHRI…ELRLFLAADQ (78 aa). Ser-1393 carries the O-(pantetheine 4'-phosphoryl)serine modification. Residues 1441–1470 are disordered; the sequence is CESSNGQHTPQTSDKGSGTLTAQKPDHDTD. Over residues 1442–1462 the composition is skewed to polar residues; the sequence is ESSNGQHTPQTSDKGSGTLTA. Residues 1472–1546 form the Carrier 2 domain; that stretch reads EMTLNRVCAI…SLQKTLRGTE (75 aa). Ser-1506 carries the O-(pantetheine 4'-phosphoryl)serine modification. Residues 1582–1855 are thioesterase (TE) domain; it reads ASAPHATSIL…IIEMSNLIGD (274 aa). Ser-1685 serves as the catalytic For thioesterase activity.

Functionally, polyketide synthase; part of the Pks2 gene cluster that mediates the formation of infectious structures (appressoria), enabling these fungi to kill insects faster. The product of the Pks2 gene cluster is different from the one of Pks1 and has still not been identified. The chain is Polyketide synthase 2 from Metarhizium acridum (strain CQMa 102).